The chain runs to 521 residues: 3,4-dihydroxyphenylacetaldehyde synthase (521 aa).

Lysine 306 bears the N6-(pyridoxal phosphate)lysine mark.

This sequence belongs to the group II decarboxylase family. Pyridoxal 5'-phosphate is required as a cofactor. Highly expressed in the cuticle and midgut. Low expression in the head and thorax.

The catalysed reaction is L-dopa + O2 + H2O + H(+) = 3,4-dihydroxyphenylacetaldehyde + H2O2 + NH4(+) + CO2. Catalyzes the decarboxylation-oxidative deamination of L-3,4-dihydroxyphenylalanine (L-DOPA) to 3,4-dihydroxylphenylacetaldehyde (DHPAA). Involved in cuticle development. Probably responsible for the protein cross-linking during the development of flexible cuticles. This is 3,4-dihydroxyphenylacetaldehyde synthase from Aedes aegypti (Yellowfever mosquito).